The following is a 585-amino-acid chain: Nitrogen permease regulator 3-like protein (585 aa).

The segment at 117–157 (GEWAKRRKPRTTVESNASSSHLVSKPESSHPSTGSFEVKSS) is disordered. Polar residues predominate over residues 128-138 (TVESNASSSHL). A compositionally biased stretch (low complexity) spans 148–157 (STGSFEVKSS).

It belongs to the NPR3 family.

The polypeptide is Nitrogen permease regulator 3-like protein (Schizosaccharomyces pombe (strain 972 / ATCC 24843) (Fission yeast)).